The chain runs to 628 residues: Kinesin-like protein subito (628 aa).

The disordered stretch occupies residues arginine 28–alanine 68. The segment covering glutamine 44 to glutamate 58 has biased composition (acidic residues). A Kinesin motor domain is found at glycine 87–isoleucine 479. Glycine 169–threonine 176 provides a ligand contact to ATP. A coiled-coil region spans residues aspartate 509–serine 612. Residues lysine 596 to aspartate 628 form a disordered region. Serine 607 is modified (phosphoserine). Position 609 is a phosphothreonine (threonine 609). At serine 612 the chain carries Phosphoserine.

This sequence belongs to the TRAFAC class myosin-kinesin ATPase superfamily. Kinesin family.

Its subcellular location is the cytoplasm. It localises to the cytoskeleton. Functionally, required during female meiosis for bipolar spindle formation in the absence of the centrosomes and chromosome homolog segregation. Also has roles in male meiosis and mitotic divisions of the early embryo. This is Kinesin-like protein subito (sub) from Drosophila melanogaster (Fruit fly).